The chain runs to 224 residues: Putative adhesin A1E_05320 (224 aa).

A signal peptide spans 1–22 (MKKLLLIAATSATMLSSTLSFA).

The chain is Putative adhesin A1E_05320 from Rickettsia canadensis (strain McKiel).